We begin with the raw amino-acid sequence, 183 residues long: Bifunctional protein PyrR (183 aa).

A PRPP-binding motif is present at residues 98–110 (VVLVDDVLYTGRT).

This sequence belongs to the purine/pyrimidine phosphoribosyltransferase family. PyrR subfamily.

The catalysed reaction is UMP + diphosphate = 5-phospho-alpha-D-ribose 1-diphosphate + uracil. In terms of biological role, regulates the transcription of the pyrimidine nucleotide (pyr) operon in response to exogenous pyrimidines. Also displays a weak uracil phosphoribosyltransferase activity which is not physiologically significant. This is Bifunctional protein PyrR from Roseiflexus sp. (strain RS-1).